Here is a 202-residue protein sequence, read N- to C-terminus: Chromophore lyase CpcT/CpeT 2 (202 aa).

It belongs to the CpcT/CpeT biliprotein lyase family.

Functionally, covalently attaches a chromophore to Cys residue(s) of phycobiliproteins. In Gloeobacter violaceus (strain ATCC 29082 / PCC 7421), this protein is Chromophore lyase CpcT/CpeT 2.